We begin with the raw amino-acid sequence, 155 residues long: S-ribosylhomocysteine lyase (155 aa).

H58, H62, and C125 together coordinate Fe cation.

This sequence belongs to the LuxS family. Homodimer. It depends on Fe cation as a cofactor.

The catalysed reaction is S-(5-deoxy-D-ribos-5-yl)-L-homocysteine = (S)-4,5-dihydroxypentane-2,3-dione + L-homocysteine. In terms of biological role, involved in the synthesis of autoinducer 2 (AI-2) which is secreted by bacteria and is used to communicate both the cell density and the metabolic potential of the environment. The regulation of gene expression in response to changes in cell density is called quorum sensing. Catalyzes the transformation of S-ribosylhomocysteine (RHC) to homocysteine (HC) and 4,5-dihydroxy-2,3-pentadione (DPD). The chain is S-ribosylhomocysteine lyase from Helicobacter pylori (strain Shi470).